The primary structure comprises 634 residues: Sodium-dependent neutral amino acid transporter B(0)AT1 (634 aa).

Residues 1–41 (MVRLVLPNPGLDARIPSLAELETIEQEEASSRPKWDNKAQY) are Cytoplasmic-facing. Position 17 is a phosphoserine (serine 17). The helical transmembrane segment at 42–62 (MLTCLGFCVGLGNVWRFPYLC) threads the bilayer. The Extracellular portion of the chain corresponds to 63–67 (QSHGG). The helical transmembrane segment at 68-88 (GAFMIPFLILLVLEGIPLLYL) threads the bilayer. At 89–120 (EFAIGQRLRRGSLGVWSSIHPALKGLGLASML) the chain is on the cytoplasmic side. The helical transmembrane segment at 121–141 (TSFMVGLYYNTIISWIMWYLF) threads the bilayer. Over 142–192 (NSFQEPLPWSDCPLNENQTGYVDECARSSPVDYFWYRETLNISTSISDSGS) the chain is Extracellular. N-linked (GlcNAc...) asparagine glycosylation is found at asparagine 158 and asparagine 182. The chain crosses the membrane as a helical span at residues 193-213 (IQWWMLLCLACAWSVLYMCTI). Residues 214–221 (RGIETTGK) are Cytoplasmic-facing. The chain crosses the membrane as a helical span at residues 222 to 242 (AVYITSTLPYVVLTIFLIRGL). Over 243 to 268 (TLKGATNGIVFLFTPNVTELAQPDTW) the chain is Extracellular. Asparagine 258 carries N-linked (GlcNAc...) asparagine glycosylation. A helical membrane pass occupies residues 269 to 289 (LDAGAQVFFSFSLAFGGLISF). At 290–304 (SSYNSVHNNCEKDSV) the chain is on the cytoplasmic side. Residues 305–325 (IVSIINGFTSVYVAIVVYSVI) traverse the membrane as a helical segment. The Extracellular portion of the chain corresponds to 326–413 (GFRATQRYDD…TEAITKMPLS (88 aa)). Residues asparagine 354 and asparagine 368 are each glycosylated (N-linked (GlcNAc...) asparagine). A helical membrane pass occupies residues 414–434 (PLWSVLFFIMLFCLGLSSMFG). The Cytoplasmic portion of the chain corresponds to 435-456 (NMEGVVVPLQDLRVIPPKWPKE). A helical membrane pass occupies residues 457–477 (VLTGLICLGTFLIGFIFTLNS). Over 478 to 490 (GQYWLSLLDSYAG) the chain is Extracellular. Residues 491 to 511 (SIPLLIIAFCEMFSVVYVYGV) form a helical membrane-spanning segment. At 512–531 (DRFNKDIEFMIGHKPNIFWQ) the chain is on the cytoplasmic side. The helical transmembrane segment at 532-552 (VTWRVVSPLLMLIIFLFFFVV) threads the bilayer. Residues 553–581 (EVSQELTYSIWDPGYEEFPKSQKISYPNW) lie on the Extracellular side of the membrane. The helical transmembrane segment at 582–602 (VYVVVVIVAGVPSLTIPGYAI) threads the bilayer. Topologically, residues 603 to 634 (YKLIRNHCQKPGDHQGLVSTLSTASMNGDLKY) are cytoplasmic. Phosphoserine is present on serine 627.

The protein belongs to the sodium:neurotransmitter symporter (SNF) (TC 2.A.22) family. SLC6A19 subfamily. Interacts in a tissue-specific manner with ACE2 in small intestine and with CLTRN in the kidney. Interacts with CLTRN; this interaction is required for trafficking of SLC6A19 to the plasma membrane and for its catalytic activation in kidneys. Interacts with ACE2; this interaction is required for trafficking of SLC6A19 to the plasma membrane and for its catalytic activation in intestine. Interacts with ANPEP; the interaction positively regulates its amino acid transporter activity. Robust expression in kidney and small intestine, with minimal expression in pancreas. Also expressed in stomach, liver, duodenum, ileocecum, colon and prostate. Not detected in testis, whole brain, cerebellum, fetal liver, spleen, skeletal muscle, uterus, heart or lung.

The protein localises to the cell membrane. It is found in the apical cell membrane. The catalysed reaction is L-alanine(in) + Na(+)(in) = L-alanine(out) + Na(+)(out). It catalyses the reaction L-cysteine(in) + Na(+)(in) = L-cysteine(out) + Na(+)(out). The enzyme catalyses L-glutamine(in) + Na(+)(in) = L-glutamine(out) + Na(+)(out). It carries out the reaction glycine(in) + Na(+)(in) = glycine(out) + Na(+)(out). The catalysed reaction is L-isoleucine(in) + Na(+)(in) = L-isoleucine(out) + Na(+)(out). It catalyses the reaction L-leucine(in) + Na(+)(in) = L-leucine(out) + Na(+)(out). The enzyme catalyses L-methionine(in) + Na(+)(in) = L-methionine(out) + Na(+)(out). It carries out the reaction L-phenylalanine(in) + Na(+)(in) = L-phenylalanine(out) + Na(+)(out). The catalysed reaction is L-serine(in) + Na(+)(in) = L-serine(out) + Na(+)(out). It catalyses the reaction L-tryptophan(in) + Na(+)(in) = L-tryptophan(out) + Na(+)(out). The enzyme catalyses L-tyrosine(in) + Na(+)(in) = L-tyrosine(out) + Na(+)(out). It carries out the reaction L-valine(in) + Na(+)(in) = L-valine(out) + Na(+)(out). In terms of biological role, transporter that mediates resorption of neutral amino acids across the apical membrane of renal and intestinal epithelial cells. This uptake is sodium-dependent and chloride-independent. Requires CLTRN in kidney or ACE2 in intestine for cell surface expression and amino acid transporter activity. The sequence is that of Sodium-dependent neutral amino acid transporter B(0)AT1 (SLC6A19) from Homo sapiens (Human).